A 62-amino-acid chain; its full sequence is DNA-directed RNA polymerase subunit Rpo10 (62 aa).

Zn(2+)-binding residues include C6, C9, C43, and C44.

The protein belongs to the archaeal Rpo10/eukaryotic RPB10 RNA polymerase subunit family. In terms of assembly, part of the RNA polymerase complex. Zn(2+) is required as a cofactor.

It localises to the cytoplasm. It catalyses the reaction RNA(n) + a ribonucleoside 5'-triphosphate = RNA(n+1) + diphosphate. DNA-dependent RNA polymerase (RNAP) catalyzes the transcription of DNA into RNA using the four ribonucleoside triphosphates as substrates. This Methanosarcina acetivorans (strain ATCC 35395 / DSM 2834 / JCM 12185 / C2A) protein is DNA-directed RNA polymerase subunit Rpo10.